The sequence spans 146 residues: Cystatin-C (146 aa).

Positions 1–26 (MAGPLRAPLLLLAILAVALALSPAAG) are cleaved as a signal peptide. A Phosphoserine modification is found at serine 43. The short motif at 81-85 (QIVAG) is the Secondary area of contact element. 2 disulfide bridges follow: cysteine 99-cysteine 109 and cysteine 123-cysteine 143.

The protein belongs to the cystatin family.

It is found in the secreted. Functionally, as an inhibitor of cysteine proteinases, this protein is thought to serve an important physiological role as a local regulator of this enzyme activity. This chain is Cystatin-C (CST3), found in Saimiri sciureus (Common squirrel monkey).